Reading from the N-terminus, the 143-residue chain is Large ribosomal subunit protein uL15 (143 aa).

The segment at 1–51 (MELNGIKPAAGAKHAKRRVGRGIGSGIGKTAGRGHKGQKSRAGGFHKVGFE) is disordered. Gly residues predominate over residues 21-31 (RGIGSGIGKTA).

Belongs to the universal ribosomal protein uL15 family. Part of the 50S ribosomal subunit.

Its function is as follows. Binds to the 23S rRNA. This chain is Large ribosomal subunit protein uL15, found in Variovorax paradoxus (strain S110).